The chain runs to 137 residues: Large ribosomal subunit protein uL16 (137 aa).

The protein belongs to the universal ribosomal protein uL16 family. In terms of assembly, part of the 50S ribosomal subunit.

Binds 23S rRNA and is also seen to make contacts with the A and possibly P site tRNAs. In Sinorhizobium medicae (strain WSM419) (Ensifer medicae), this protein is Large ribosomal subunit protein uL16.